The chain runs to 84 residues: Phosphoribosylformylglycinamidine synthase subunit PurS (84 aa).

Belongs to the PurS family. In terms of assembly, homodimer. Part of the FGAM synthase complex composed of 1 PurL, 1 PurQ and 2 PurS subunits.

Its subcellular location is the cytoplasm. The enzyme catalyses N(2)-formyl-N(1)-(5-phospho-beta-D-ribosyl)glycinamide + L-glutamine + ATP + H2O = 2-formamido-N(1)-(5-O-phospho-beta-D-ribosyl)acetamidine + L-glutamate + ADP + phosphate + H(+). It participates in purine metabolism; IMP biosynthesis via de novo pathway; 5-amino-1-(5-phospho-D-ribosyl)imidazole from N(2)-formyl-N(1)-(5-phospho-D-ribosyl)glycinamide: step 1/2. Functionally, part of the phosphoribosylformylglycinamidine synthase complex involved in the purines biosynthetic pathway. Catalyzes the ATP-dependent conversion of formylglycinamide ribonucleotide (FGAR) and glutamine to yield formylglycinamidine ribonucleotide (FGAM) and glutamate. The FGAM synthase complex is composed of three subunits. PurQ produces an ammonia molecule by converting glutamine to glutamate. PurL transfers the ammonia molecule to FGAR to form FGAM in an ATP-dependent manner. PurS interacts with PurQ and PurL and is thought to assist in the transfer of the ammonia molecule from PurQ to PurL. The protein is Phosphoribosylformylglycinamidine synthase subunit PurS of Methanothermobacter thermautotrophicus (strain ATCC 29096 / DSM 1053 / JCM 10044 / NBRC 100330 / Delta H) (Methanobacterium thermoautotrophicum).